The primary structure comprises 1226 residues: Cytosolic carboxypeptidase 1 (1226 aa).

Positions 599–619 (TEDDEDTESNSSVEQASVEVP) are disordered. In terms of domain architecture, Peptidase M14 spans 848 to 1138 (YPYTYSTLQM…KFCVGLLRLK (291 aa)). Residues His920, Glu923, and His1017 each contribute to the Zn(2+) site. The active-site Proton donor/acceptor is Glu1102. Residue Ser1168 is modified to Phosphoserine. Residues 1206 to 1226 (YEPSAQEEVLSDSELSRTYLP) are disordered.

The protein belongs to the peptidase M14 family. As to quaternary structure, interacts with MYLK. It depends on Zn(2+) as a cofactor.

It is found in the cytoplasm. The protein resides in the cytosol. It localises to the nucleus. Its subcellular location is the mitochondrion. The enzyme catalyses (L-glutamyl)(n+1)-gamma-L-glutamyl-L-glutamyl-[protein] + H2O = (L-glutamyl)(n)-gamma-L-glutamyl-L-glutamyl-[protein] + L-glutamate. It catalyses the reaction C-terminal L-alpha-aminoacyl-L-glutamyl-L-glutamyl-[tubulin] + H2O = C-terminal L-alpha-aminoacyl-L-glutamyl-[tubulin] + L-glutamate. Metallocarboxypeptidase that mediates protein deglutamylation of tubulin and non-tubulin target proteins. Catalyzes the removal of polyglutamate side chains present on the gamma-carboxyl group of glutamate residues within the C-terminal tail of alpha- and beta-tubulin. Specifically cleaves tubulin long-side-chains, while it is not able to remove the branching point glutamate. Also catalyzes the removal of polyglutamate residues from the carboxy-terminus of alpha-tubulin as well as non-tubulin proteins such as MYLK. Involved in KLF4 deglutamylation which promotes KLF4 proteasome-mediated degradation, thereby negatively regulating cell pluripotency maintenance and embryogenesis. The polypeptide is Cytosolic carboxypeptidase 1 (Homo sapiens (Human)).